Reading from the N-terminus, the 1977-residue chain is Echinoderm microtubule-associated protein-like 5 (1977 aa).

WD repeat units follow at residues 59-100 (GHSD…TVSV), 104-145 (VHTH…MLSM), 148-187 (GHTD…LTPK), 195-233 (GDLQ…RTIQ), 235-273 (AHTA…TVID), 280-321 (GYKG…LIMQ), 323-362 (HCEG…LIAR), 364-403 (NMDE…EVVH), 406-445 (DRKE…KKVG), 449-488 (GSLS…EVTS), and 561-601 (GHSA…KLKD). The disordered stretch occupies residues 609–629 (ESLTESNSDESDSDLSDVPEL). Residues 615–629 (NSDESDSDLSDVPEL) are compositionally biased toward acidic residues. WD repeat units lie at residues 725–766 (GHDD…PLSI), 770–811 (YHQY…KLSV), 814–853 (GSKD…LIGR), 861–900 (GKND…KTVK), 901–940 (AHDG…KTYA), 996–1035 (HMEG…CMLA), 1038–1077 (KLKK…DLVS), 1080–1120 (HRKD…RVGV), and 1236–1276 (AHST…HREK). Disordered stretches follow at residues 1274–1299 (REKK…SDVT) and 1323–1363 (PHLQ…NVGK). A compositionally biased stretch (acidic residues) spans 1281-1294 (SEESDTDSEEDGGY). Over residues 1326–1337 (QQKEPSVDERQG) the composition is skewed to basic and acidic residues. WD repeat units follow at residues 1420–1471 (EHND…TLSI), 1475–1516 (SHSK…KIAS), 1519–1558 (GHNQ…LLSK), 1568–1606 (ARMQ…RVVA), 1608–1654 (AHNG…RAFR), 1699–1739 (GHVD…MLNK), 1741–1782 (NLGH…GKKR), 1783–1822 (DRRC…TLNR), 1895–1934 (AEKA…KFAK), and 1940–1977 (GHSP…HTPH).

Belongs to the WD repeat EMAP family. As to expression, highly expressed in brain, especially in hippocampus, cerebellum and olfactory bulb (at protein level).

Its subcellular location is the cytoplasm. The protein resides in the cytoskeleton. May modify the assembly dynamics of microtubules, such that microtubules are slightly longer, but more dynamic. The protein is Echinoderm microtubule-associated protein-like 5 (Eml5) of Rattus norvegicus (Rat).